The chain runs to 379 residues: Cysteine-rich receptor-like protein kinase 44 (379 aa).

The Protein kinase domain maps to 56–336; sequence FSPYNHLGEG…VRMLNANSFT (281 aa). ATP-binding positions include 62–70 and Lys-84; that span reads LGEGGFGAV. Residue Tyr-129 is modified to Phosphotyrosine. Asp-181 (proton acceptor) is an active-site residue. Position 185 is a phosphoserine (Ser-185). Residue Thr-223 is modified to Phosphothreonine. Tyr-231 is subject to Phosphotyrosine.

This sequence belongs to the protein kinase superfamily. Ser/Thr protein kinase family. CRK subfamily.

The catalysed reaction is L-seryl-[protein] + ATP = O-phospho-L-seryl-[protein] + ADP + H(+). It carries out the reaction L-threonyl-[protein] + ATP = O-phospho-L-threonyl-[protein] + ADP + H(+). This is Cysteine-rich receptor-like protein kinase 44 from Arabidopsis thaliana (Mouse-ear cress).